The sequence spans 370 residues: MSADCEGNSTCPANSTEEDPPVGMEGQGSLKLVFTVLSAVMVGLVMFSFGCSVESRKLWLHLRRPWGIAVGLLCQFGLMPLTAYLLAIGFGLKPFQAIAVLIMGSCPGGTVSNVLTFWVDGDMDLSISMTTCSTVAALGMMPLCLYVYTRSWTLPQSLTIPYQSIGITLVSLVVPVASGIYVNYRWPKQATFILKVGAAVGGMLLLVVAVTGVVLAKGWNIDVTLLVISCIFPLVGHVMGFLLAFLTHQSWQRCRTISIETGAQNIQLCIAMMQLSFSAEYLVQLLNFALAYGLFQVLHGLLIVAAYQAYKRRQKSQYRRQHPECQDISSEKQPRETSAFLDKGAEAAVTLGLEQHHRTAELTSHVPSCE.

The disordered stretch occupies residues 1–24 (MSADCEGNSTCPANSTEEDPPVGM). The Extracellular segment spans residues 1–32 (MSADCEGNSTCPANSTEEDPPVGMEGQGSLKL). Asn8 and Asn14 each carry an N-linked (GlcNAc...) asparagine glycan. The helical transmembrane segment at 33–53 (VFTVLSAVMVGLVMFSFGCSV) threads the bilayer. Topologically, residues 54–67 (ESRKLWLHLRRPWG) are cytoplasmic. The helical transmembrane segment at 68-88 (IAVGLLCQFGLMPLTAYLLAI) threads the bilayer. The Extracellular portion of the chain corresponds to 89–97 (GFGLKPFQA). A helical transmembrane segment spans residues 98–118 (IAVLIMGSCPGGTVSNVLTFW). The Cytoplasmic segment spans residues 119–126 (VDGDMDLS). The chain crosses the membrane as a helical span at residues 127–147 (ISMTTCSTVAALGMMPLCLYV). Over 148–159 (YTRSWTLPQSLT) the chain is Extracellular. The helical transmembrane segment at 160–180 (IPYQSIGITLVSLVVPVASGI) threads the bilayer. Topologically, residues 181–195 (YVNYRWPKQATFILK) are cytoplasmic. A helical transmembrane segment spans residues 196–216 (VGAAVGGMLLLVVAVTGVVLA). Topologically, residues 217 to 224 (KGWNIDVT) are extracellular. Residues 225-245 (LLVISCIFPLVGHVMGFLLAF) traverse the membrane as a helical segment. At 246–265 (LTHQSWQRCRTISIETGAQN) the chain is on the cytoplasmic side. The helical transmembrane segment at 266–283 (IQLCIAMMQLSFSAEYLV) threads the bilayer. A topological domain (extracellular) is located at residue Gln284. The chain crosses the membrane as a helical span at residues 285-305 (LLNFALAYGLFQVLHGLLIVA). Topologically, residues 306-370 (AYQAYKRRQK…ELTSHVPSCE (65 aa)) are cytoplasmic.

Belongs to the bile acid:sodium symporter (BASS) (TC 2.A.28) family. Post-translationally, glycosylated. Highly expressed in heart, lung, spleen and adrenal gland. Moderately expressed in skeletal muscle, testis and small intestine.

The protein localises to the membrane. The catalysed reaction is estrone 3-sulfate(out) + 2 Na(+)(out) = estrone 3-sulfate(in) + 2 Na(+)(in). The enzyme catalyses 17beta-estradiol 3-sulfate(out) + 2 Na(+)(out) = 17beta-estradiol 3-sulfate(in) + 2 Na(+)(in). It catalyses the reaction dehydroepiandrosterone 3-sulfate(out) + 2 Na(+)(out) = dehydroepiandrosterone 3-sulfate(in) + 2 Na(+)(in). It carries out the reaction androst-5-ene-diol 3-sulfate(out) + 2 Na(+)(out) = androst-5-ene-diol 3-sulfate(in) + 2 Na(+)(in). The catalysed reaction is pregnenolone sulfate(out) + 2 Na(+)(out) = pregnenolone sulfate(in) + 2 Na(+)(in). The enzyme catalyses taurolithocholate 3-sulfate(out) + 2 Na(+)(out) = taurolithocholate 3-sulfate(in) + 2 Na(+)(in). It catalyses the reaction androsterone 3alpha-sulfate(out) + 2 Na(+)(out) = androsterone 3alpha-sulfate(in) + 2 Na(+)(in). It carries out the reaction 5alpha-dihydrotestosterone sulfate(out) + 2 Na(+)(out) = 5alpha-dihydrotestosterone sulfate(in) + 2 Na(+)(in). The catalysed reaction is 17beta-estradiol 17-sulfate(out) + 2 Na(+)(out) = 17beta-estradiol 17-sulfate(in) + 2 Na(+)(in). The enzyme catalyses 17alpha-hydroxypregnenolone 3-sulfate(out) + 2 Na(+)(out) = 17alpha-hydroxypregnenolone 3-sulfate(in) + 2 Na(+)(in). It catalyses the reaction epiandrosterone 3-sulfate(out) + 2 Na(+)(out) = epiandrosterone 3-sulfate(in) + 2 Na(+)(in). It carries out the reaction epitestosterone 17-sulfate(out) + 2 Na(+)(out) = epitestosterone 17-sulfate(in) + 2 Na(+)(in). The catalysed reaction is testosterone 17-sulfate(out) + 2 Na(+)(out) = testosterone 17-sulfate(in) + 2 Na(+)(in). The enzyme catalyses 16alpha-hydroxydehydroepiandrosterone 3-sulfate(out) + 2 Na(+)(out) = 16alpha-hydroxydehydroepiandrosterone 3-sulfate(in) + 2 Na(+)(in). Functionally, transports sulfoconjugated steroid hormones from the extracellular compartment into the cytosol in a sodium-dependent manner without hydrolysis. Steroid sulfate hormones are commonly considered to be biologically inactive metabolites, that may be activated by steroid sulfatases into free steroids. May play an important role by delivering sulfoconjugated steroids to specific target cells in reproductive organs. May play a role transporting the estriol precursor 16alpha-hydroxydehydroepiandrosterone 3-sulfate (16a-OH-DHEAS) at the fetal blood vessel endothelium. Can also transport other sulfoconjugated molecules such as taurolithocholic acid-3-sulfate and sulfoconjugated pyrenes. This Rattus norvegicus (Rat) protein is Sodium-dependent organic anion transporter (Slc10a6).